Consider the following 327-residue polypeptide: Beta-ketoacyl-[acyl-carrier-protein] synthase III (327 aa).

Active-site residues include C112 and H253. An ACP-binding region spans residues 254–258; that stretch reads QANER. Residue N283 is part of the active site.

It belongs to the thiolase-like superfamily. FabH family. Homodimer.

The protein localises to the cytoplasm. It carries out the reaction malonyl-[ACP] + acetyl-CoA + H(+) = 3-oxobutanoyl-[ACP] + CO2 + CoA. The protein operates within lipid metabolism; fatty acid biosynthesis. In terms of biological role, catalyzes the condensation reaction of fatty acid synthesis by the addition to an acyl acceptor of two carbons from malonyl-ACP. Catalyzes the first condensation reaction which initiates fatty acid synthesis and may therefore play a role in governing the total rate of fatty acid production. Possesses both acetoacetyl-ACP synthase and acetyl transacylase activities. Its substrate specificity determines the biosynthesis of branched-chain and/or straight-chain of fatty acids. This Chlamydia trachomatis serovar A (strain ATCC VR-571B / DSM 19440 / HAR-13) protein is Beta-ketoacyl-[acyl-carrier-protein] synthase III.